Here is a 119-residue protein sequence, read N- to C-terminus: Large ribosomal subunit protein bL17 (119 aa).

The protein belongs to the bacterial ribosomal protein bL17 family. In terms of assembly, part of the 50S ribosomal subunit. Contacts protein L32.

In Malacoplasma penetrans (strain HF-2) (Mycoplasma penetrans), this protein is Large ribosomal subunit protein bL17.